Here is a 1160-residue protein sequence, read N- to C-terminus: Carbamoyl phosphate synthase arginine-specific large chain, mitochondrial (1160 aa).

The tract at residues alanine 81 to aspartate 478 is carboxyphosphate synthetic domain. Residues arginine 208, arginine 248, glycine 254, glycine 255, lysine 285, leucine 287, glutamate 292, glycine 318, isoleucine 319, histidine 320, glutamine 361, and glutamate 375 each coordinate ATP. The region spanning alanine 212–leucine 404 is the ATP-grasp 1 domain. 3 residues coordinate Mg(2+): glutamine 361, glutamate 375, and asparagine 377. Positions 361, 375, and 377 each coordinate Mn(2+). The segment at proline 479–aspartate 623 is oligomerization domain. The segment at isoleucine 624–glutamine 1012 is carbamoyl phosphate synthetic domain. Residues serine 748–isoleucine 946 form the ATP-grasp 2 domain. Residues arginine 784, lysine 823, isoleucine 825, glutamate 830, glycine 855, valine 856, histidine 857, serine 858, glutamine 898, and glutamate 917 each coordinate ATP. Mg(2+)-binding residues include glutamine 898, glutamate 917, and asparagine 919. Residues glutamine 898, glutamate 917, and asparagine 919 each contribute to the Mn(2+) site. The allosteric domain stretch occupies residues asparagine 1013–methionine 1144. An MGS-like domain is found at phenylalanine 1014 to leucine 1160.

This sequence belongs to the CarB family. In terms of assembly, heterodimer composed of 2 chains; the small (or glutamine) chain promotes the hydrolysis of glutamine to ammonia, which is used by the large (or ammonia) chain to synthesize carbamoyl phosphate. Mg(2+) is required as a cofactor. The cofactor is Mn(2+).

It is found in the mitochondrion. The catalysed reaction is hydrogencarbonate + L-glutamine + 2 ATP + H2O = carbamoyl phosphate + L-glutamate + 2 ADP + phosphate + 2 H(+). It catalyses the reaction hydrogencarbonate + NH4(+) + 2 ATP = carbamoyl phosphate + 2 ADP + phosphate + 2 H(+). The protein operates within amino-acid biosynthesis; L-arginine biosynthesis; carbamoyl phosphate from bicarbonate: step 1/1. Its function is as follows. Large subunit of the arginine-specific carbamoyl phosphate synthase (CPSase). CPSase catalyzes the formation of carbamoyl phosphate from the ammonia moiety of glutamine, hydrogencarbonate, and phosphate donated by ATP, the first step of the arginine biosynthetic pathway. The large subunit (synthetase) binds the substrates ammonia (free or transferred from glutamine from the small subunit), hydrogencarbonate and ATP and carries out an ATP-coupled ligase reaction, activating hydrogencarbonate by forming carboxy phosphate which reacts with ammonia to form carbamoyl phosphate. The protein is Carbamoyl phosphate synthase arginine-specific large chain, mitochondrial (arg4) of Schizosaccharomyces pombe (strain 972 / ATCC 24843) (Fission yeast).